The following is a 253-amino-acid chain: Demethylmenaquinone methyltransferase (253 aa).

S-adenosyl-L-methionine is bound by residues Thr-75, Asp-96, and 124 to 125 (DA).

This sequence belongs to the class I-like SAM-binding methyltransferase superfamily. MenG/UbiE family.

The enzyme catalyses a 2-demethylmenaquinol + S-adenosyl-L-methionine = a menaquinol + S-adenosyl-L-homocysteine + H(+). It functions in the pathway quinol/quinone metabolism; menaquinone biosynthesis; menaquinol from 1,4-dihydroxy-2-naphthoate: step 2/2. Functionally, methyltransferase required for the conversion of demethylmenaquinol (DMKH2) to menaquinol (MKH2). In Desulfitobacterium hafniense (strain Y51), this protein is Demethylmenaquinone methyltransferase.